The chain runs to 100 residues: Flagellar transcriptional regulator FlhD (100 aa).

Belongs to the FlhD family. Homodimer; disulfide-linked. Forms a heterohexamer composed of two FlhC and four FlhD subunits. Each FlhC binds a FlhD dimer, forming a heterotrimer, and a hexamer assembles by dimerization of two heterotrimers.

The protein resides in the cytoplasm. Its function is as follows. Functions in complex with FlhC as a master transcriptional regulator that regulates transcription of several flagellar and non-flagellar operons by binding to their promoter region. Activates expression of class 2 flagellar genes, including fliA, which is a flagellum-specific sigma factor that turns on the class 3 genes. Also regulates genes whose products function in a variety of physiological pathways. The polypeptide is Flagellar transcriptional regulator FlhD (Ralstonia pickettii (strain 12D)).